A 303-amino-acid chain; its full sequence is Acetyl-coenzyme A carboxylase carboxyl transferase subunit beta (303 aa).

Residues 29 to 298 form the CoA carboxyltransferase N-terminal domain; that stretch reads LWVKCPETGQ…ATPAPASAAA (270 aa).

Belongs to the AccD/PCCB family. As to quaternary structure, acetyl-CoA carboxylase is a heterohexamer composed of biotin carboxyl carrier protein (AccB), biotin carboxylase (AccC) and two subunits each of ACCase subunit alpha (AccA) and ACCase subunit beta (AccD).

The protein resides in the cytoplasm. The enzyme catalyses N(6)-carboxybiotinyl-L-lysyl-[protein] + acetyl-CoA = N(6)-biotinyl-L-lysyl-[protein] + malonyl-CoA. Its pathway is lipid metabolism; malonyl-CoA biosynthesis; malonyl-CoA from acetyl-CoA: step 1/1. Component of the acetyl coenzyme A carboxylase (ACC) complex. Biotin carboxylase (BC) catalyzes the carboxylation of biotin on its carrier protein (BCCP) and then the CO(2) group is transferred by the transcarboxylase to acetyl-CoA to form malonyl-CoA. This Methylobacterium sp. (strain 4-46) protein is Acetyl-coenzyme A carboxylase carboxyl transferase subunit beta.